The sequence spans 115 residues: Large ribosomal subunit protein bL19 (115 aa).

It belongs to the bacterial ribosomal protein bL19 family.

Its function is as follows. This protein is located at the 30S-50S ribosomal subunit interface and may play a role in the structure and function of the aminoacyl-tRNA binding site. The polypeptide is Large ribosomal subunit protein bL19 (Citrobacter koseri (strain ATCC BAA-895 / CDC 4225-83 / SGSC4696)).